A 158-amino-acid chain; its full sequence is 2-C-methyl-D-erythritol 2,4-cyclodiphosphate synthase (158 aa).

The a divalent metal cation site is built by Asp8 and His10. Residues 8–10 (DVH) and 34–35 (HS) contribute to the 4-CDP-2-C-methyl-D-erythritol 2-phosphate site. An a divalent metal cation-binding site is contributed by His42. Residues 56 to 58 (DIG), 61 to 65 (FPDTD), 100 to 106 (AQVPKMA), 132 to 135 (TTTE), Phe139, and Arg142 contribute to the 4-CDP-2-C-methyl-D-erythritol 2-phosphate site.

The protein belongs to the IspF family. Homotrimer. A divalent metal cation serves as cofactor.

The catalysed reaction is 4-CDP-2-C-methyl-D-erythritol 2-phosphate = 2-C-methyl-D-erythritol 2,4-cyclic diphosphate + CMP. The protein operates within isoprenoid biosynthesis; isopentenyl diphosphate biosynthesis via DXP pathway; isopentenyl diphosphate from 1-deoxy-D-xylulose 5-phosphate: step 4/6. Functionally, involved in the biosynthesis of isopentenyl diphosphate (IPP) and dimethylallyl diphosphate (DMAPP), two major building blocks of isoprenoid compounds. Catalyzes the conversion of 4-diphosphocytidyl-2-C-methyl-D-erythritol 2-phosphate (CDP-ME2P) to 2-C-methyl-D-erythritol 2,4-cyclodiphosphate (ME-CPP) with a corresponding release of cytidine 5-monophosphate (CMP). The sequence is that of 2-C-methyl-D-erythritol 2,4-cyclodiphosphate synthase from Sodalis glossinidius (strain morsitans).